The chain runs to 101 residues: MGTPELKIILEFSAGAELLFGNIKRRELVLDGNQKWTIANLLKWMHANILTERPELFLQGDTVRPGILVLINDTDWELLGELDYELQPNDNVLFISTLHGG.

Gly101 carries the 1-thioglycine modification. Residue Gly101 forms a Glycyl lysine isopeptide (Gly-Lys) (interchain with K-? in acceptor proteins) linkage.

This sequence belongs to the URM1 family. Interacts with cer. In terms of processing, C-terminal thiocarboxylation occurs in 2 steps, it is first acyl-adenylated (-COAMP) via the hesA/moeB/thiF part of the MOCS3 homolog, then thiocarboxylated (-COSH) via the rhodanese domain of the MOCS3 homolog.

It localises to the cytoplasm. The protein operates within tRNA modification; 5-methoxycarbonylmethyl-2-thiouridine-tRNA biosynthesis. Functionally, acts as a sulfur carrier required for 2-thiolation of mcm(5)S(2)U at tRNA wobble positions of cytosolic tRNA(Lys), tRNA(Glu) and tRNA(Gln). Serves as sulfur donor in tRNA 2-thiolation reaction by being thiocarboxylated (-COSH) at its C-terminus by MOCS3. The sulfur is then transferred to tRNA to form 2-thiolation of mcm(5)S(2)U. Also acts as a ubiquitin-like protein (UBL) that is covalently conjugated via an isopeptide bond to lysine residues of target proteins such as Prx2/Jafrac1, Ciao1, Eip71CD and GILT1. The thiocarboxylated form serves as substrate for conjugation and oxidative stress specifically induces the formation of UBL-protein conjugates. The chain is Ubiquitin-related modifier 1 homolog from Drosophila yakuba (Fruit fly).